The following is a 692-amino-acid chain: Glycogen phosphorylase (692 aa).

Residue Lys-586 is modified to N6-(pyridoxal phosphate)lysine.

Belongs to the glycogen phosphorylase family. Requires pyridoxal 5'-phosphate as cofactor.

The enzyme catalyses [(1-&gt;4)-alpha-D-glucosyl](n) + phosphate = [(1-&gt;4)-alpha-D-glucosyl](n-1) + alpha-D-glucose 1-phosphate. Its function is as follows. Phosphorylase is an important allosteric enzyme in carbohydrate metabolism. Enzymes from different sources differ in their regulatory mechanisms and in their natural substrates. However, all known phosphorylases share catalytic and structural properties. The protein is Glycogen phosphorylase (glgP) of Aquifex aeolicus (strain VF5).